A 548-amino-acid polypeptide reads, in one-letter code: T-complex protein 1 subunit theta (548 aa).

Ala-2 bears the N-acetylalanine mark. At Ser-23 the chain carries Phosphoserine. Tyr-30 is subject to Phosphotyrosine. Residues Tyr-47 and Gly-48 each coordinate ADP. Position 99 (Asp-99) interacts with Mg(2+). Gly-100, Thr-101, Asn-102, and Phe-103 together coordinate ADP. ATP is bound by residues Gly-100, Thr-101, and Asn-102. Ser-162 bears the Phosphoserine mark. Residues Met-169, Ser-170, and Lys-171 each contribute to the ADP site. Residues Ser-170 and Lys-171 each coordinate ATP. Ser-213 carries the phosphoserine modification. Glycyl lysine isopeptide (Lys-Gly) (interchain with G-Cter in SUMO2) cross-links involve residues Lys-224, Lys-254, and Lys-260. Ser-269 and Ser-317 each carry phosphoserine. 2 positions are modified to N6-acetyllysine: Lys-318 and Lys-400. Gly-412 contacts ADP. Gly-412 serves as a coordination point for ATP. Residue Lys-459 forms a Glycyl lysine isopeptide (Lys-Gly) (interchain with G-Cter in SUMO1) linkage. Lys-466 bears the N6-acetyllysine mark. Asp-499 lines the ADP pocket. Residues Asp-499 and Lys-504 each coordinate ATP. Tyr-505 carries the phosphotyrosine modification. The disordered stretch occupies residues 529–548 (PAGGPKPPSGKKDWDDDQND). Lys-534 is covalently cross-linked (Glycyl lysine isopeptide (Lys-Gly) (interchain with G-Cter in SUMO2)). A Phosphoserine modification is found at Ser-537. Lys-539 participates in a covalent cross-link: Glycyl lysine isopeptide (Lys-Gly) (interchain with G-Cter in SUMO2).

Belongs to the TCP-1 chaperonin family. In terms of assembly, component of the chaperonin-containing T-complex (TRiC), a hexadecamer composed of two identical back-to-back stacked rings enclosing a protein folding chamber. Each ring is made up of eight different subunits: TCP1/CCT1, CCT2, CCT3, CCT4, CCT5, CCT6A/CCT6, CCT7, CCT8. Interacts with PACRG. Interacts with DNAAF4. Interacts with synaptic plasticity regulator PANTS.

It is found in the cytoplasm. The protein localises to the cytoskeleton. Its subcellular location is the microtubule organizing center. It localises to the centrosome. The protein resides in the cilium basal body. It catalyses the reaction ATP + H2O = ADP + phosphate + H(+). Component of the chaperonin-containing T-complex (TRiC), a molecular chaperone complex that assists the folding of actin, tubulin and other proteins upon ATP hydrolysis. The TRiC complex mediates the folding of WRAP53/TCAB1, thereby regulating telomere maintenance. As part of the TRiC complex may play a role in the assembly of BBSome, a complex involved in ciliogenesis regulating transports vesicles to the cilia. This chain is T-complex protein 1 subunit theta (CCT8), found in Homo sapiens (Human).